The sequence spans 1298 residues: MAKFLRLHIRGIRSVGDEDHDVHKIDFLSPCTLISGPNGTGKTTTIEALNFVTTGQMPTQKKQNFIHSTDVARKTRVDASVTLEFIDVKGRECTAVRRLVVTSGTKAAALAEEHTLAIKYPDGTVNTLSSKVCDFNTALLKHLGVPRAVFKYVIFCHQEDSTWPLSEPKELKKRFDDIFQLTKFVKAQERMKKIVLDFKKEMQTHEMSKQLYETHVRDKLVARQNQEECERKISKRKEETDELKERKANGQKKIEEMRTSIHELEDTLTSFKKTELERQNLKKQLSLIRVEPYFGTEEELKREIEEFRGSEGRSYGEERARIQKKIGKNNQERQELSQKKTEFENRISSLKAEVIHCQSLKYDLERLENQLRSELDLEHDADIDIEIDNAITLKIRGMSDKARMIAKNCAELQSNLRTAQEAATKIEVEMKTLQNEKVKLEKEVEQLKFKIKQGQNATAGMKDLLKKEEALRKSLADLPLLDENALTECKLKREKYLKQLDILKKKCAEAEKNAEKDREKESLKQTLSIARKKMTAYQRIYDNNWQGLIGQAPDFPWTPILSKTFHKLRNDKKIMEEDLRDVQLNVQKLETMQHQYRKQEESLTAQELKLSENIFEACSCEAEEVSEKLENLRKRLKKARKDLAPLSAKSNLYDSYIEESKSSGCCPLCDRDFKTKKEINEFSKKLENMTLSFPTEQEELEKLVSKLEKEEIIIVKAEGQANELQRIVKELKEVREKNRKLSTEMAEEKSNLSKNEKQLETVNAKLKLAEDLQTDVGVIQQLYEQTEENEKRYEQLVSESDSSDGLSYTELRKKVEDKDEEYRKIVQEGEELQKCSEERNKLQSKLNELGTHRVSLGEAAAQAGAFAEQLETKIKEIQECITAISQKRNEDLPDAQFKKDDLTRNVSSKEEEKKKAEMEVQMMKKELDQKIFHRKSLFKKVQEGGLCERQLMDKENNIATLNASLEENQQRQKRFEEDLRSFDSSHQRESILKDQLTRMIIENKIKELKRTLATFDGQINEDRITEQKQAYNKLQNELRLIGNEEVKIYTQMQEYEKQKKIAEAKLSTKECQNAESNYRDAIIELAITKESISDLTKYRNCLDASLIQFHSEKMGRVNGIIDDLWRKVYNSTDITTIRIRSDATSETSSKKVAYEYNVMMVHETGTEVEMRGRCSAGQKMLASLLIRIALAEVFGGSCSMIALDEPTTNLDESKVEGMAIVLADIIAERRGFDENGKLRGRDMQMVVITHDERLVNRITISCRPEYIYCLGKDEHGISFLSKRYPDGTVKRVNTKRRF.

ATP contacts are provided by arginine 13, asparagine 38, glycine 39, glycine 41, lysine 42, threonine 43, threonine 44, isoleucine 66, and glutamine 158. Threonine 43 is a binding site for Mg(2+). Glutamine 158 contributes to the Mg(2+) binding site. 3 coiled-coil regions span residues 222–291 (ARQN…IRVE), 317–598 (EERA…QYRK), and 622–660 (AEEV…IEES). The Zinc-hook domain maps to 622 to 719 (AEEVSEKLEN…EEIIIVKAEG (98 aa)). Zn(2+) contacts are provided by cysteine 666 and cysteine 669. Coiled coils occupy residues 691–719 (LSFP…KAEG) and 754–1092 (KNEK…KESI).

This sequence belongs to the SMC family. RAD50 subfamily. As to quaternary structure, component of the MRN complex composed of two heterodimers rad-50 and mre-11 associated with a single nbs-1. It depends on Zn(2+) as a cofactor.

It is found in the nucleus. The protein localises to the chromosome. It catalyses the reaction ATP + H2O = ADP + phosphate + H(+). Component of the MRN complex, which plays a central role in double-strand break (DSB) repair, DNA recombination, maintenance of telomere integrity and meiosis. The MRN complex is involved in the repair of DNA double-strand breaks (DSBs) via homologous recombination (HR), an error-free mechanism which primarily occurs during S and G2 phases. The complex (1) mediates the end resection of damaged DNA, which generates proper single-stranded DNA, a key initial steps in HR, and is (2) required for the recruitment of other repair factors and efficient activation of ATM and ATR upon DNA damage. The MRN complex possesses single-strand endonuclease activity and double-strand-specific 3'-5' exonuclease activity, which are provided by mre-11, to initiate end resection, which is required for single-strand invasion and recombination. Within the complex, rad-50 is both required to bind DNA ends and hold them in close proximity and regulate the activity of mre-11. Rad-50 provides an ATP-dependent control of mre-11 by positioning DNA ends into the mre-11 active site: ATP-binding induces a large structural change from an open form with accessible mre-11 nuclease sites into a closed form. The sequence is that of DNA repair protein rad-50 (rad-50) from Caenorhabditis elegans.